We begin with the raw amino-acid sequence, 460 residues long: MVTLSNTSMVGGRDLPSTGFAWWSGNARLINLSGKLLGAHVAHAGLIVFWAGAMTLFEVAHFIPEKPMYEQGLILLPHIATLGWGVGPAGEVTDIFPFFVVGVLHLISSAVLGLGGIYHALRGPEVLEEYSSFFGYDWKDKNQMTNIIGYHLILLGCGALLLVFKAMFFGGVYDTWAPGGGDVRVITNPTLNPAIIFGYLLKAPFGGEGWIISVNNMEDIIGGHIWIGLICISGGIWHILTKPFGWARRALIWSGEAYLSYSLGALSLMGFIASVFVWFNNTAYPSEFYGPTGMEASQSQAFTFLVRDQRLGANIASAQGPTGLGKYLMRSPSGEIIFGGETMRFWDFRGPWLEPLRGPNGLDLDKLRNDIQPWQVRRAAEYMTHAPLGSLNSVGGVITDVNSFNYVSPRAWLATSHFVLGFFFLVGHLWHAGRARAAAAGFEKGIDRETEPTLFMPDLD.

The Cytoplasmic segment spans residues 1 to 35 (MVTLSNTSMVGGRDLPSTGFAWWSGNARLINLSGK). The helical transmembrane segment at 36–58 (LLGAHVAHAGLIVFWAGAMTLFE) threads the bilayer. The Lumenal, thylakoid portion of the chain corresponds to 59–98 (VAHFIPEKPMYEQGLILLPHIATLGWGVGPAGEVTDIFPF). The chain crosses the membrane as a helical span at residues 99-121 (FVVGVLHLISSAVLGLGGIYHAL). Over 122–142 (RGPEVLEEYSSFFGYDWKDKN) the chain is Cytoplasmic. A helical membrane pass occupies residues 143–165 (QMTNIIGYHLILLGCGALLLVFK). The Lumenal, thylakoid segment spans residues 166-220 (AMFFGGVYDTWAPGGGDVRVITNPTLNPAIIFGYLLKAPFGGEGWIISVNNMEDI). Residues 221–240 (IGGHIWIGLICISGGIWHIL) form a helical membrane-spanning segment. Residues 241 to 255 (TKPFGWARRALIWSG) are Cytoplasmic-facing. Residues 256–276 (EAYLSYSLGALSLMGFIASVF) form a helical membrane-spanning segment. At 277–411 (VWFNNTAYPS…NSFNYVSPRA (135 aa)) the chain is on the lumenal, thylakoid side. [CaMn4O5] cluster-binding residues include glutamate 341 and arginine 344. A helical membrane pass occupies residues 412-436 (WLATSHFVLGFFFLVGHLWHAGRAR). Residues 437–460 (AAAAGFEKGIDRETEPTLFMPDLD) lie on the Cytoplasmic side of the membrane.

The protein belongs to the PsbB/PsbC family. PsbC subfamily. As to quaternary structure, PSII is composed of 1 copy each of membrane proteins PsbA, PsbB, PsbC, PsbD, PsbE, PsbF, PsbH, PsbI, PsbJ, PsbK, PsbL, PsbM, PsbT, PsbX, PsbY, PsbZ, Psb30/Ycf12, peripheral proteins PsbO, CyanoQ (PsbQ), PsbU, PsbV and a large number of cofactors. It forms dimeric complexes. Requires Binds multiple chlorophylls and provides some of the ligands for the Ca-4Mn-5O cluster of the oxygen-evolving complex. It may also provide a ligand for a Cl- that is required for oxygen evolution. PSII binds additional chlorophylls, carotenoids and specific lipids. as cofactor.

It localises to the cellular thylakoid membrane. Its function is as follows. One of the components of the core complex of photosystem II (PSII). PSII binds chlorophyll and helps catalyze the primary light-induced photochemical processes of PSII. PSII is a light-driven water:plastoquinone oxidoreductase, using light energy to abstract electrons from H(2)O, generating O(2) and a proton gradient subsequently used for ATP formation. Required for correct assembly of PSII. This is Photosystem II CP43 reaction center protein from Synechocystis sp. (strain ATCC 27184 / PCC 6803 / Kazusa).